The chain runs to 374 residues: MVEVFDKYKDLIQEGDLALIWISRDNIKPVTINANETFNTRYGSFPHKDMIGKPYGSQIAIRTKVAKKFAFVHVMQPSPELWTLSLPHRTQIVYTPDSSYIMQRLNCSPNSRVIEAGTGSGSFSHAFARSVGQLYSYEFHPVRYEQATEEFKEHGLLDKNTIITHRDVCKDGFTIKKTDETSYQFKADEEQLQIKADVIFLDLPAPWEAIPHIDSVIDNDEKVGLCCFSPCIEQVDKTLEVLEKHGWFNVEMVEIQGRQYESRRQMVRSLDDALERLSDIKKRKLAMVERRQKAEEELEKKIEANEKNLPELPPKSIEKSKFNPFGKGYRVKEGDANFQWKEVTKVESEIKSHTSYLTFAYKIKRNEDENLDKN.

S-adenosyl-L-methionine-binding positions include 120–122, glutamate 138, arginine 143, 167–168, and aspartate 202; these read SGS and DV.

This sequence belongs to the class I-like SAM-binding methyltransferase superfamily. TRM61 family. Heterotetramer; composed of two copies of TRM6 and two copies of TRM61.

It localises to the nucleus. The catalysed reaction is adenosine(58) in tRNA + S-adenosyl-L-methionine = N(1)-methyladenosine(58) in tRNA + S-adenosyl-L-homocysteine + H(+). Catalytic subunit of tRNA (adenine-N(1)-)-methyltransferase, which catalyzes the formation of N(1)-methyladenine at position 58 (m1A58) in initiator methionyl-tRNA. The protein is tRNA (adenine(58)-N(1))-methyltransferase catalytic subunit TRM61 (TRM61) of Candida glabrata (strain ATCC 2001 / BCRC 20586 / JCM 3761 / NBRC 0622 / NRRL Y-65 / CBS 138) (Yeast).